The following is a 160-amino-acid chain: Cytochrome b6-f complex subunit 4 (160 aa).

Helical transmembrane passes span 36-56, 95-115, and 131-151; these read LLYI…GLAV, LLGV…PFLE, and TVFL…TLPI.

This sequence belongs to the cytochrome b family. PetD subfamily. The 4 large subunits of the cytochrome b6-f complex are cytochrome b6, subunit IV (17 kDa polypeptide, petD), cytochrome f and the Rieske protein, while the 4 small subunits are petG, petL, petM and petN. The complex functions as a dimer.

The protein resides in the plastid. It localises to the chloroplast thylakoid membrane. Functionally, component of the cytochrome b6-f complex, which mediates electron transfer between photosystem II (PSII) and photosystem I (PSI), cyclic electron flow around PSI, and state transitions. This is Cytochrome b6-f complex subunit 4 from Pisum sativum (Garden pea).